The following is a 471-amino-acid chain: Ankyrin repeat and death domain-containing protein 1A (471 aa).

ANK repeat units lie at residues 19–48 (VGRVALHWAAGAGHEQAVRLLLEHEAAVDE), 52–81 (FGMNALLLSAWFGHLRILQILVNSGAKIHC), 85–114 (DGLTLLHCAAQKGHVPVLAFIMEDLEDVAL), 120–149 (LGRTAFHRAAEHGQLDALDFLVGSGCDHSV), 153–182 (EGNTALHLAAGRGHMAVLQRLVDIGLDLEE), 186–215 (EGLTALHAAAGGTHPHCVRLLLRAGSTVNA), 219–248 (KNLSCLHYAALSGSEDVSRVLIHAGGCTNV), 251–280 (HGASPLHLAVMHNFPALVQLLINSDSDLNA), 284–313 (RQQTPLHLAAEHAWQDIAEMLLIAGVDLNL), and 317–346 (QGKTALAVAARSNHVSLVDMIIKADRFYKW). A Death domain is found at 379 to 467 (SVLWRLASRH…DLAELAVASV (89 aa)).

The protein is Ankyrin repeat and death domain-containing protein 1A (ANKDD1A) of Macaca fascicularis (Crab-eating macaque).